A 176-amino-acid chain; its full sequence is Lipoprotein signal peptidase (176 aa).

4 consecutive transmembrane segments (helical) span residues 10–30 (LFQFYPHNLIWLGLSVLAIVL), 48–68 (VPVLPFLNWTLLHNYGAAFSF), 78–98 (YFFTSLAGLVSILFVFWLLRM), and 102–122 (MVVLPVAIALILGGALGNLID). Residues D131 and D149 contribute to the active site. A helical transmembrane segment spans residues 141–161 (HFPAFNIADSAITLGTILLLI).

It belongs to the peptidase A8 family.

It is found in the cell inner membrane. It catalyses the reaction Release of signal peptides from bacterial membrane prolipoproteins. Hydrolyzes -Xaa-Yaa-Zaa-|-(S,diacylglyceryl)Cys-, in which Xaa is hydrophobic (preferably Leu), and Yaa (Ala or Ser) and Zaa (Gly or Ala) have small, neutral side chains.. Its pathway is protein modification; lipoprotein biosynthesis (signal peptide cleavage). In terms of biological role, this protein specifically catalyzes the removal of signal peptides from prolipoproteins. The polypeptide is Lipoprotein signal peptidase (Acinetobacter baumannii (strain SDF)).